A 123-amino-acid chain; its full sequence is Phosphoribosyl-AMP cyclohydrolase (123 aa).

A Mg(2+)-binding site is contributed by D76. Residue C77 coordinates Zn(2+). Positions 78 and 80 each coordinate Mg(2+). Zn(2+) is bound by residues C93 and C100.

The protein belongs to the PRA-CH family. Homodimer. Mg(2+) serves as cofactor. Requires Zn(2+) as cofactor.

It localises to the cytoplasm. It catalyses the reaction 1-(5-phospho-beta-D-ribosyl)-5'-AMP + H2O = 1-(5-phospho-beta-D-ribosyl)-5-[(5-phospho-beta-D-ribosylamino)methylideneamino]imidazole-4-carboxamide. Its pathway is amino-acid biosynthesis; L-histidine biosynthesis; L-histidine from 5-phospho-alpha-D-ribose 1-diphosphate: step 3/9. In terms of biological role, catalyzes the hydrolysis of the adenine ring of phosphoribosyl-AMP. This Methanocorpusculum labreanum (strain ATCC 43576 / DSM 4855 / Z) protein is Phosphoribosyl-AMP cyclohydrolase.